Here is a 487-residue protein sequence, read N- to C-terminus: b(0,+)-type amino acid transporter 1 (487 aa).

The tract at residues 1–22 (MGETVPRRRREDEKSIQSDEPK) is disordered. The Cytoplasmic portion of the chain corresponds to 1 to 31 (MGETVPRRRREDEKSIQSDEPKTTSLQKEVG). S18 bears the Phosphoserine mark. A helical membrane pass occupies residues 32 to 55 (LISGICIIVGTIIGSGIFISPKSV). 43-47 (IIGSG) lines the L-arginine pocket. The Extracellular segment spans residues 56-62 (LSNTQAV). Residues 63 to 84 (GPCLIIWAACGVLGTLGALCFA) form a helical membrane-spanning segment. The Cytoplasmic portion of the chain corresponds to 85 to 110 (ELGTMITKSGGEYPYLMEAFGPIPAY). The chain crosses the membrane as a helical span at residues 111 to 137 (LFSWSSLLVMKPSSFAIICLSFSEYVA). The Extracellular segment spans residues 138 to 147 (TPFYSGCEPP). 2 helical membrane-spanning segments follow: residues 148–169 (KVVV…NSLS) and 170–193 (VRLG…IIII). The Extracellular segment spans residues 194–217 (SGLVLLAQGNTKNFENSFEGAEVS). A helical transmembrane segment spans residues 218 to 238 (VGAISLALYNGLWAYDGWNQL). Position 233 (D233) interacts with L-arginine. At 239–251 (NYITEELRNPFRN) the chain is on the cytoplasmic side. Residues 252–274 (LPLAIIFGIPLVTVCYILINISY) form a helical membrane-spanning segment. Residues 275-302 (FTVMTPTELLQSQAVAVTFGDRVLYPAS) lie on the Extracellular side of the membrane. Residues 303–325 (WIVPVFVAFSTIGAANGTCFTAG) form a helical membrane-spanning segment. Topologically, residues 326 to 351 (RLVYVAGREGHMLKVLSYISVRRLTP) are cytoplasmic. A run of 2 helical transmembrane segments spans residues 352-370 (APAI…IPGD) and 371-391 (INSL…LTIL). At 392 to 410 (GLIVMRFTRKELERPIKVP) the chain is on the cytoplasmic side. Residues 411–431 (IFIPILVTFIAAFLVLAPVIT) form a helical membrane-spanning segment. Residues 432 to 434 (NPA) are Extracellular-facing. The helical transmembrane segment at 435–450 (WEYLYCVLFILSGLVF) threads the bilayer. The Cytoplasmic portion of the chain corresponds to 451–487 (YFLFVYYKFEWAQKISKPITMHLQMLMEVVPPEPDPK).

This sequence belongs to the amino acid-polyamine-organocation (APC) superfamily. In terms of assembly, disulfide-linked heterodimer composed of the catalytic light chain subunit SLC7A9 and the heavy chain subunit. The heterodimer is the minimal functional unit. Assembles in heterotetramers (dimers of heterodimers) and higher order oligomers. Interacts with CAV1. Kidney and small intestine.

The protein resides in the apical cell membrane. The catalysed reaction is L-leucine(out) + L-arginine(in) = L-leucine(in) + L-arginine(out). The enzyme catalyses L-histidine(out) + L-arginine(in) = L-histidine(in) + L-arginine(out). It catalyses the reaction L-arginine(in) + L-phenylalanine(out) = L-arginine(out) + L-phenylalanine(in). It carries out the reaction L-cysteine(out) + L-arginine(in) = L-cysteine(in) + L-arginine(out). The catalysed reaction is L-cystine(out) + L-arginine(in) = L-cystine(in) + L-arginine(out). The enzyme catalyses L-lysine(out) + L-arginine(in) = L-lysine(in) + L-arginine(out). In terms of biological role, mediates the electrogenic exchange between cationic amino acids and neutral amino acids, with a stoichiometry of 1:1. Has system b(0,+)-like activity with high affinity for extracellular cationic amino acids and L-cystine and lower affinity for intracellular neutral amino acids. Substrate exchange is driven by high concentration of intracellular neutral amino acids and the intracellular reduction of L-cystine to L-cysteine. Required for reabsorption of L-cystine and dibasic amino acids across the brush border membrane in renal proximal tubules. This Oryctolagus cuniculus (Rabbit) protein is b(0,+)-type amino acid transporter 1.